The chain runs to 211 residues: uncharacterized protein (211 aa).

This is an uncharacterized protein from Acidianus convivator (ATV).